The following is a 132-amino-acid chain: uncharacterized protein (132 aa).

The tract at residues 17 to 75 is disordered; that stretch reads RSAVPRWPHLSSQSGVEPPDRWTGTPGWPSRDQEAPGSMMPPAAAQPSAHGALVPPATA. Residues 51-65 are compositionally biased toward low complexity; it reads APGSMMPPAAAQPSA.

As to expression, expressed exclusively in heart.

The protein resides in the cytoplasm. This is an uncharacterized protein from Homo sapiens (Human).